Here is a 269-residue protein sequence, read N- to C-terminus: Tryptophan synthase alpha chain (269 aa).

Catalysis depends on proton acceptor residues E49 and D60.

Belongs to the TrpA family. In terms of assembly, tetramer of two alpha and two beta chains.

The catalysed reaction is (1S,2R)-1-C-(indol-3-yl)glycerol 3-phosphate + L-serine = D-glyceraldehyde 3-phosphate + L-tryptophan + H2O. It participates in amino-acid biosynthesis; L-tryptophan biosynthesis; L-tryptophan from chorismate: step 5/5. Functionally, the alpha subunit is responsible for the aldol cleavage of indoleglycerol phosphate to indole and glyceraldehyde 3-phosphate. The chain is Tryptophan synthase alpha chain from Cronobacter sakazakii (strain ATCC BAA-894) (Enterobacter sakazakii).